The primary structure comprises 527 residues: Peptide chain release factor 3 (527 aa).

In terms of domain architecture, tr-type G spans Ala-9–Leu-277. GTP is bound by residues Ser-18 to Thr-25, Asp-86 to His-90, and Asn-140 to Asp-143.

This sequence belongs to the TRAFAC class translation factor GTPase superfamily. Classic translation factor GTPase family. PrfC subfamily.

Its subcellular location is the cytoplasm. Its function is as follows. Increases the formation of ribosomal termination complexes and stimulates activities of RF-1 and RF-2. It binds guanine nucleotides and has strong preference for UGA stop codons. It may interact directly with the ribosome. The stimulation of RF-1 and RF-2 is significantly reduced by GTP and GDP, but not by GMP. The chain is Peptide chain release factor 3 from Pseudomonas fluorescens (strain ATCC BAA-477 / NRRL B-23932 / Pf-5).